The chain runs to 119 residues: Large ribosomal subunit protein bL17 (119 aa).

This sequence belongs to the bacterial ribosomal protein bL17 family. In terms of assembly, part of the 50S ribosomal subunit. Contacts protein L32.

This chain is Large ribosomal subunit protein bL17, found in Mycoplasma mycoides subsp. mycoides SC (strain CCUG 32753 / NCTC 10114 / PG1).